Here is a 67-residue protein sequence, read N- to C-terminus: uncharacterized protein (67 aa).

This is an uncharacterized protein from Haloarcula hispanica (His1V).